The chain runs to 358 residues: E3 ubiquitin-protein ligase RFI2 (358 aa).

The interval 1–34 is disordered; that stretch reads MAGAKDSGCDDDLRIAGGCDPGKRGNPEDSSSPV. The RING-type; atypical zinc-finger motif lies at 38–83; sequence CSICLESVLDDGTRSKAKLQCGHQFHLDCIGSAFNMKGAMQCPNCR. Disordered regions lie at residues 174-201 and 248-313; these read GPAATPRTSDNNSTDDHPWNSHSNDHFH and SNQR…DQNV. Residues 187–201 are compositionally biased toward basic and acidic residues; that stretch reads TDDHPWNSHSNDHFH. A compositionally biased stretch (polar residues) spans 248 to 266; sequence SNQRSSPAINSYQGSSTQM. Positions 299-309 are enriched in pro residues; sequence LPPPPPPPPMP.

It localises to the nucleus. The catalysed reaction is S-ubiquitinyl-[E2 ubiquitin-conjugating enzyme]-L-cysteine + [acceptor protein]-L-lysine = [E2 ubiquitin-conjugating enzyme]-L-cysteine + N(6)-ubiquitinyl-[acceptor protein]-L-lysine.. It functions in the pathway protein modification; protein ubiquitination. In terms of biological role, mediates phytochrome (phyA and phyB)-controlled seedling deetiolation responses such as hypocotyl elongation in response to red and far-red light. Required for light-induced expression of LHCB3 and CHALCONE SYNTHASE (CHS). Negatively regulates CONSTANS (CO) and FLOWERING LOCUS T (FT) expression and photoperiodic flowering. The polypeptide is E3 ubiquitin-protein ligase RFI2 (Arabidopsis thaliana (Mouse-ear cress)).